The primary structure comprises 1615 residues: Regulating synaptic membrane exocytosis protein 1 (1615 aa).

The segment at 1-26 is disordered; sequence MSSAVGPRGPRPPTVPPPMQELPDLS. The segment covering 9–20 has biased composition (pro residues); the sequence is GPRPPTVPPPMQ. The 184-residue stretch at 22 to 205 folds into the RabBD domain; that stretch reads LPDLSHLTEE…TKSGAWFFGS (184 aa). The FYVE-type zinc finger occupies 133 to 193; sequence KDDAPTCGIC…VCNLCRKQQE (61 aa). Residues C139, C142, C155, C158, C163, C166, C185, and C188 each coordinate Zn(2+). The tract at residues 205 to 569 is disordered; it reads SGPQQPSQDG…CEDVELESES (365 aa). Residues 206–222 are compositionally biased toward polar residues; it reads GPQQPSQDGTLSDTATG. Basic and acidic residues predominate over residues 227 to 240; the sequence is VPREKKARLQERSR. Over residues 241 to 256 the composition is skewed to polar residues; it reads SQTPLSTAAVSSQDTA. Residues 327-379 are compositionally biased toward basic and acidic residues; it reads ADERERKERRETRRLEKGRSQDYSDRPEKRDNGRVAEDQKQRKEEEYQTRYRS. A compositionally biased stretch (basic residues) spans 399–410; sequence MHARVSRARHER. The segment covering 421–459 has biased composition (low complexity); the sequence is EAAAAAPAEATAGKRAPATARVSPPESPRARAAAAQPPT. The span at 460-475 shows a compositional bias: pro residues; the sequence is EHGPPPPRPAPGPAEP. The span at 476 to 489 shows a compositional bias: basic and acidic residues; the sequence is PEPRVPEPLRKQGR. Residues 511 to 523 are compositionally biased toward polar residues; it reads RNDSLSSDQSESV. At S514 the chain carries Phosphoserine. The span at 529–541 shows a compositional bias: basic residues; the sequence is KPHRPKRGGKRRQ. The segment covering 559 to 569 has biased composition (acidic residues); that stretch reads SCEDVELESES. A Phosphoserine modification is found at S592. The region spanning 619 to 705 is the PDZ domain; it reads RTTMPKESGA…EPQVEIIVSR (87 aa). Residues 712 to 746 form a disordered region; that stretch reads RIPESSHPPLESSSSSFESQKMERPSISVISPTSP. Residues 714 to 730 are compositionally biased toward low complexity; the sequence is PESSHPPLESSSSSFES. A phosphoserine mark is found at S742 and S745. In terms of domain architecture, C2 1 spans 756–879; the sequence is LPGQLSVKLW…ALLDDEPHWY (124 aa). The interval 884 to 1201 is disordered; it reads HDESSLPLPQ…RQLPQVPVRS (318 aa). The residue at position 895 (S895) is a Phosphoserine. The span at 949–958 shows a compositional bias: polar residues; sequence ATTLTVPEQQ. S991 carries the post-translational modification Phosphoserine. Residues 1006 to 1023 show a composition bias toward basic and acidic residues; sequence RHHDASRSPADHRSRHVE. Residue S1045 is modified to Phosphoserine. Basic and acidic residues predominate over residues 1078–1092; sequence SPERERHSRKSERCS. Residues 1173–1187 are compositionally biased toward polar residues; the sequence is QGSPTQSPPADTSFG. S1175 carries the phosphoserine modification. T1177 bears the Phosphothreonine mark. Phosphoserine is present on residues S1179, S1231, S1233, S1234, S1262, S1263, and S1265. The tract at residues 1256–1313 is disordered; the sequence is DNASAKSSDSDVSDVSAISRASSTSRLSSTSFMSEQSERPRGRISSFTPKMQGRRMGT. Positions 1268–1289 are enriched in low complexity; sequence SDVSAISRASSTSRLSSTSFMS. S1339 carries the phosphoserine modification. A disordered region spans residues 1368 to 1397; that stretch reads RSRSTSQLSQTESGHKKLKSTIQRSTETGM. The 119-residue stretch at 1461-1579 folds into the C2 2 domain; it reads AMGDIQIGME…DLSSMVIGWY (119 aa). Phosphoserine is present on residues S1600, S1603, S1606, and S1615.

As to quaternary structure, interacts with RAB3C, RAB10, RAB26 and RAB37. Binds SNAP25, SYT1 and CACNA1B. Interaction with SYT1 is enhanced by calcium ions. Interaction with SNAP25 is weaker in the presence of calcium ions. Binds RAB3A, RAB3B and RAB3D that have been activated by GTP-binding. Binds UNC13A. Interacts with TSPOAP1 and RIMBP2. Interacts with PPFIA3 and PPFIA4. Interacts with ERC1. In terms of processing, phosphorylated by BRSK1. In terms of tissue distribution, highly expressed in hippocampus, brain cortex, cerebellum and olfactory bulb. Detected at lower levels in midbrain, hindbrain and spinal cord. Detected retina and in spinal cord motor neurons.

Its subcellular location is the cell membrane. It localises to the synapse. It is found in the presynaptic cell membrane. Its function is as follows. Rab effector involved in exocytosis. May act as scaffold protein that regulates neurotransmitter release at the active zone. Essential for maintaining normal probability of neurotransmitter release and for regulating release during short-term synaptic plasticity. Plays a role in dendrite formation by melanocytes. The sequence is that of Regulating synaptic membrane exocytosis protein 1 (Rims1) from Rattus norvegicus (Rat).